The following is a 1576-amino-acid chain: Pentafunctional AROM polypeptide (1576 aa).

The segment at 1–387 (MGSTTFENPT…YEPKASVVED (387 aa)) is 3-dehydroquinate synthase. Residues 49–51 (DTN), 86–89 (ENSK), 117–119 (GGV), and Asp122 contribute to the NAD(+) site. Arg133 contacts 7-phospho-2-dehydro-3-deoxy-D-arabino-heptonate. 142 to 143 (TT) is a binding site for NAD(+). Asp149 and Lys155 together coordinate 7-phospho-2-dehydro-3-deoxy-D-arabino-heptonate. An NAD(+)-binding site is contributed by Lys164. Asn165 contacts 7-phospho-2-dehydro-3-deoxy-D-arabino-heptonate. NAD(+) contacts are provided by residues 182 to 185 (FLET) and Asn193. Glu197 provides a ligand contact to Zn(2+). 7-phospho-2-dehydro-3-deoxy-D-arabino-heptonate-binding positions include 197–200 (EVVK) and Lys253. The Proton acceptor; for 3-dehydroquinate synthase activity role is filled by Glu263. Residues 267 to 271 (RNILN) and His274 each bind 7-phospho-2-dehydro-3-deoxy-D-arabino-heptonate. Residue His274 coordinates Zn(2+). His278 acts as the Proton acceptor; for 3-dehydroquinate synthase activity in catalysis. 2 residues coordinate 7-phospho-2-dehydro-3-deoxy-D-arabino-heptonate: His290 and Lys359. His290 is a Zn(2+) binding site. The EPSP synthase stretch occupies residues 400–841 (VRPSVPETLN…WDILSKSFQV (442 aa)). Cys823 acts as the For EPSP synthase activity in catalysis. Residues 863–1055 (DKSIFIIGMR…RNKPQSFFVS (193 aa)) are shikimate kinase. 870–877 (GMRGAGKT) is a binding site for ATP. Positions 1056–1276 (LTMPDISGAA…AAPGQLSAAE (221 aa)) are 3-dehydroquinase. Residue His1179 is the Proton acceptor; for 3-dehydroquinate dehydratase activity of the active site. The active-site Schiff-base intermediate with substrate; for 3-dehydroquinate dehydratase activity is the Lys1207. The interval 1289–1576 (PKSFYLFGTP…RAAVMGDSTA (288 aa)) is shikimate dehydrogenase.

It in the N-terminal section; belongs to the sugar phosphate cyclases superfamily. Dehydroquinate synthase family. The protein in the 2nd section; belongs to the EPSP synthase family. This sequence in the 3rd section; belongs to the shikimate kinase family. In the 4th section; belongs to the type-I 3-dehydroquinase family. It in the C-terminal section; belongs to the shikimate dehydrogenase family. As to quaternary structure, homodimer. Zn(2+) serves as cofactor.

The protein localises to the cytoplasm. The catalysed reaction is 7-phospho-2-dehydro-3-deoxy-D-arabino-heptonate = 3-dehydroquinate + phosphate. It carries out the reaction 3-dehydroquinate = 3-dehydroshikimate + H2O. The enzyme catalyses shikimate + NADP(+) = 3-dehydroshikimate + NADPH + H(+). It catalyses the reaction shikimate + ATP = 3-phosphoshikimate + ADP + H(+). The catalysed reaction is 3-phosphoshikimate + phosphoenolpyruvate = 5-O-(1-carboxyvinyl)-3-phosphoshikimate + phosphate. The protein operates within metabolic intermediate biosynthesis; chorismate biosynthesis; chorismate from D-erythrose 4-phosphate and phosphoenolpyruvate: step 2/7. It participates in metabolic intermediate biosynthesis; chorismate biosynthesis; chorismate from D-erythrose 4-phosphate and phosphoenolpyruvate: step 3/7. Its pathway is metabolic intermediate biosynthesis; chorismate biosynthesis; chorismate from D-erythrose 4-phosphate and phosphoenolpyruvate: step 4/7. It functions in the pathway metabolic intermediate biosynthesis; chorismate biosynthesis; chorismate from D-erythrose 4-phosphate and phosphoenolpyruvate: step 5/7. The protein operates within metabolic intermediate biosynthesis; chorismate biosynthesis; chorismate from D-erythrose 4-phosphate and phosphoenolpyruvate: step 6/7. Functionally, the AROM polypeptide catalyzes 5 consecutive enzymatic reactions in prechorismate polyaromatic amino acid biosynthesis. The sequence is that of Pentafunctional AROM polypeptide from Sclerotinia sclerotiorum (strain ATCC 18683 / 1980 / Ss-1) (White mold).